A 295-amino-acid polypeptide reads, in one-letter code: 4-hydroxy-tetrahydrodipicolinate synthase (295 aa).

Position 47 (threonine 47) interacts with pyruvate. Tyrosine 135 acts as the Proton donor/acceptor in catalysis. Lysine 163 acts as the Schiff-base intermediate with substrate in catalysis. Isoleucine 204 is a pyruvate binding site.

This sequence belongs to the DapA family. As to quaternary structure, homotetramer; dimer of dimers.

It localises to the cytoplasm. The catalysed reaction is L-aspartate 4-semialdehyde + pyruvate = (2S,4S)-4-hydroxy-2,3,4,5-tetrahydrodipicolinate + H2O + H(+). It functions in the pathway amino-acid biosynthesis; L-lysine biosynthesis via DAP pathway; (S)-tetrahydrodipicolinate from L-aspartate: step 3/4. Its function is as follows. Catalyzes the condensation of (S)-aspartate-beta-semialdehyde [(S)-ASA] and pyruvate to 4-hydroxy-tetrahydrodipicolinate (HTPA). This chain is 4-hydroxy-tetrahydrodipicolinate synthase, found in Caldicellulosiruptor saccharolyticus (strain ATCC 43494 / DSM 8903 / Tp8T 6331).